A 128-amino-acid chain; its full sequence is Large ribosomal subunit protein bL20 (128 aa).

The protein belongs to the bacterial ribosomal protein bL20 family.

In terms of biological role, binds directly to 23S ribosomal RNA and is necessary for the in vitro assembly process of the 50S ribosomal subunit. It is not involved in the protein synthesizing functions of that subunit. This chain is Large ribosomal subunit protein bL20, found in Corynebacterium efficiens (strain DSM 44549 / YS-314 / AJ 12310 / JCM 11189 / NBRC 100395).